Here is a 164-residue protein sequence, read N- to C-terminus: ATP synthase subunit b (164 aa).

The chain crosses the membrane as a helical span at residues 8–28 (FGIIFWQTITLLFVLFILGKF).

This sequence belongs to the ATPase B chain family. In terms of assembly, F-type ATPases have 2 components, F(1) - the catalytic core - and F(0) - the membrane proton channel. F(1) has five subunits: alpha(3), beta(3), gamma(1), delta(1), epsilon(1). F(0) has three main subunits: a(1), b(2) and c(10-14). The alpha and beta chains form an alternating ring which encloses part of the gamma chain. F(1) is attached to F(0) by a central stalk formed by the gamma and epsilon chains, while a peripheral stalk is formed by the delta and b chains.

It localises to the cell membrane. Its function is as follows. F(1)F(0) ATP synthase produces ATP from ADP in the presence of a proton or sodium gradient. F-type ATPases consist of two structural domains, F(1) containing the extramembraneous catalytic core and F(0) containing the membrane proton channel, linked together by a central stalk and a peripheral stalk. During catalysis, ATP synthesis in the catalytic domain of F(1) is coupled via a rotary mechanism of the central stalk subunits to proton translocation. Component of the F(0) channel, it forms part of the peripheral stalk, linking F(1) to F(0). This chain is ATP synthase subunit b, found in Amoebophilus asiaticus (strain 5a2).